The following is a 529-amino-acid chain: MQQRRPVRRALLSVSDKAGIVEFAQALSARGVELLSTGGTARLLAEKGLPVTEVSDYTGFPEMMDGRVKTLHPKVHGGILGRRGLDDAIMEEHQILPIDMVVVNLYPFAQTVAREGCSLEDAVENIDIGGPTMVRSAAKNHKDVAIVVKSSDYDAIIKEMDANEGSLMLATRFDLAIKAFEHTAAYDSMIANYFGSMVPAYHGESKEAAGRFPRTLNLNFIKKQDMRYGENSHQQAAFYIEENVKEASVATATQVQGKALSYNNIADTDAALECVKEFAEPACVIVKHANPCGVAVSNSILDAYDRAYKTDPTSAFGGIIAFNRELDAETAQAIISRQFVEVIIAPSASEEALKITAAKQNVRVLICGQWGERAPGLDFKRVNGGLLVQDRDLGIVGAEELRVVTKRQPTEQELRDALFCWKVAKFVKSNAIVYAKNNMTIGIGAGQMSRVYSAKIAGIKAADEGLEVKGSSMASDAFFPFRDGIDAAAAAGVTCVIQPGGSIRDDEVIAAADEHGIAMLFTDMRHFRH.

In terms of domain architecture, MGS-like spans 1–148 (MQQRRPVRRA…KNHKDVAIVV (148 aa)). N6-acetyllysine is present on Lys287.

It belongs to the PurH family.

The enzyme catalyses (6R)-10-formyltetrahydrofolate + 5-amino-1-(5-phospho-beta-D-ribosyl)imidazole-4-carboxamide = 5-formamido-1-(5-phospho-D-ribosyl)imidazole-4-carboxamide + (6S)-5,6,7,8-tetrahydrofolate. The catalysed reaction is IMP + H2O = 5-formamido-1-(5-phospho-D-ribosyl)imidazole-4-carboxamide. The protein operates within purine metabolism; IMP biosynthesis via de novo pathway; 5-formamido-1-(5-phospho-D-ribosyl)imidazole-4-carboxamide from 5-amino-1-(5-phospho-D-ribosyl)imidazole-4-carboxamide (10-formyl THF route): step 1/1. Its pathway is purine metabolism; IMP biosynthesis via de novo pathway; IMP from 5-formamido-1-(5-phospho-D-ribosyl)imidazole-4-carboxamide: step 1/1. This is Bifunctional purine biosynthesis protein PurH from Escherichia coli O127:H6 (strain E2348/69 / EPEC).